Here is a 505-residue protein sequence, read N- to C-terminus: Adenylosuccinate synthetase, chloroplastic (505 aa).

The N-terminal 60 residues, 1–60 (MTTMNISTLRLDSNPITTSTKSTTHRSGALGYNGSYSCRLLQFQKKNKAPSIIVCSTKPL), are a transit peptide targeting the chloroplast. Residues 92–98 (GDEGKGK) and 120–122 (GHT) each bind GTP. Asp93 (proton acceptor) is an active-site residue. Positions 93 and 120 each coordinate Mg(2+). Residues 93 to 96 (DEGK), 118 to 121 (NAGH), Thr210, Arg224, Gln304, Thr319, and Arg383 contribute to the IMP site. Catalysis depends on His121, which acts as the Proton donor. 379 to 385 (TTTGRPR) contributes to the substrate binding site. Residues Arg385, 411 to 413 (KLD), and 494 to 496 (GVG) contribute to the GTP site.

Belongs to the adenylosuccinate synthetase family. In terms of assembly, homodimer. Mg(2+) is required as a cofactor.

It localises to the plastid. The protein resides in the chloroplast. It catalyses the reaction IMP + L-aspartate + GTP = N(6)-(1,2-dicarboxyethyl)-AMP + GDP + phosphate + 2 H(+). It participates in purine metabolism; AMP biosynthesis via de novo pathway; AMP from IMP: step 1/2. Functionally, plays an important role in the de novo pathway and in the salvage pathway of purine nucleotide biosynthesis. Catalyzes the first committed step in the biosynthesis of AMP from IMP. This Nicotiana tabacum (Common tobacco) protein is Adenylosuccinate synthetase, chloroplastic.